The chain runs to 348 residues: Nicotinate-nucleotide--dimethylbenzimidazole phosphoribosyltransferase (348 aa).

Glu-316 (proton acceptor) is an active-site residue.

The protein belongs to the CobT family.

The enzyme catalyses 5,6-dimethylbenzimidazole + nicotinate beta-D-ribonucleotide = alpha-ribazole 5'-phosphate + nicotinate + H(+). It functions in the pathway nucleoside biosynthesis; alpha-ribazole biosynthesis; alpha-ribazole from 5,6-dimethylbenzimidazole: step 1/2. Its function is as follows. Catalyzes the synthesis of alpha-ribazole-5'-phosphate from nicotinate mononucleotide (NAMN) and 5,6-dimethylbenzimidazole (DMB). This Xanthomonas axonopodis pv. citri (strain 306) protein is Nicotinate-nucleotide--dimethylbenzimidazole phosphoribosyltransferase.